The sequence spans 467 residues: Proton extrusion protein PxcA (467 aa).

The segment covering 146–161 (SQVRTTSSQPPENPSL) has biased composition (polar residues). 2 disordered regions span residues 146–167 (SQVRTTSSQPPENPSLTDALRT) and 186–205 (PQLIKQRTEQSKKSRGKADT). Residues 191 to 203 (QRTEQSKKSRGKA) are compositionally biased toward basic and acidic residues. 4 consecutive transmembrane segments (helical) span residues 249–269 (FILLIIIVPLLTHQLSKALIV), 352–372 (IFSVGAFIWLLLVSKPSIMVL), 391–411 (IIILFTDVFVGFHSPHGWEVI), and 427–447 (FIFLFIATFPVILDTIFKYWI).

The protein belongs to the CemA family.

The protein localises to the cell inner membrane. Functionally, required for H(+) efflux immediately after light irradiation to form a rapid H(+) concentration gradient across the thylakoid membranes. Together with PxcL, contributes to transient H(+) uptake following dark to light transition. The protein is Proton extrusion protein PxcA of Nostoc sp. (strain PCC 7120 / SAG 25.82 / UTEX 2576).